A 210-amino-acid polypeptide reads, in one-letter code: Na(+)-translocating NADH-quinone reductase subunit D (210 aa).

6 helical membrane passes run 10–30, 42–62, 72–92, 103–123, 143–163, and 178–198; these read VLFG…GVCS, LVMS…ISMI, IIVQ…ILKA, VFVG…AFAM, FVLI…ILGF, and NGLL…IWFI.

It belongs to the NqrDE/RnfAE family. As to quaternary structure, composed of six subunits; NqrA, NqrB, NqrC, NqrD, NqrE and NqrF.

It localises to the cell inner membrane. The catalysed reaction is a ubiquinone + n Na(+)(in) + NADH + H(+) = a ubiquinol + n Na(+)(out) + NAD(+). NQR complex catalyzes the reduction of ubiquinone-1 to ubiquinol by two successive reactions, coupled with the transport of Na(+) ions from the cytoplasm to the periplasm. NqrA to NqrE are probably involved in the second step, the conversion of ubisemiquinone to ubiquinol. The polypeptide is Na(+)-translocating NADH-quinone reductase subunit D (Pseudoalteromonas atlantica (strain T6c / ATCC BAA-1087)).